Consider the following 322-residue polypeptide: Undecaprenyl-phosphate 4-deoxy-4-formamido-L-arabinose transferase (322 aa).

Residues 1–235 are Cytoplasmic-facing; it reads MFEIHPVKKV…TCLTTTPLRM (235 aa). A helical membrane pass occupies residues 236–256; sequence LSLLGSIIAIGGFSIAVLLVI. The Periplasmic portion of the chain corresponds to 257–269; it reads LRLTFGPQWAAEG. Residues 270–290 traverse the membrane as a helical segment; it reads VFMLFAVLFTFIGAQFIGMGL. Over 291–322 the chain is Cytoplasmic; it reads LGEYIGRIYTDVRARPRYFVQQVIRPSSKENE.

Belongs to the glycosyltransferase 2 family.

It is found in the cell inner membrane. The enzyme catalyses UDP-4-deoxy-4-formamido-beta-L-arabinose + di-trans,octa-cis-undecaprenyl phosphate = 4-deoxy-4-formamido-alpha-L-arabinopyranosyl di-trans,octa-cis-undecaprenyl phosphate + UDP. It participates in glycolipid biosynthesis; 4-amino-4-deoxy-alpha-L-arabinose undecaprenyl phosphate biosynthesis; 4-amino-4-deoxy-alpha-L-arabinose undecaprenyl phosphate from UDP-4-deoxy-4-formamido-beta-L-arabinose and undecaprenyl phosphate: step 1/2. It functions in the pathway bacterial outer membrane biogenesis; lipopolysaccharide biosynthesis. Functionally, catalyzes the transfer of 4-deoxy-4-formamido-L-arabinose from UDP to undecaprenyl phosphate. The modified arabinose is attached to lipid A and is required for resistance to polymyxin and cationic antimicrobial peptides. In Shigella flexneri, this protein is Undecaprenyl-phosphate 4-deoxy-4-formamido-L-arabinose transferase.